Here is a 216-residue protein sequence, read N- to C-terminus: Adenylate kinase (216 aa).

ATP is bound at residue 10–15 (GAGKGT). Residues 30–59 (STGDMLREAVKADTPLGIEAKKVMDVGGLI) form an NMP region. Residues threonine 31, arginine 36, 57-59 (GLI), 85-88 (GFPR), and glutamine 92 contribute to the AMP site. The interval 122 to 159 (GRRAHLTSGRTYHIVYNPPKVEGIDDITGEELIQRTDD) is LID. ATP contacts are provided by residues arginine 123 and 132–133 (TY). 2 residues coordinate AMP: arginine 156 and arginine 167. Glycine 202 is an ATP binding site.

Belongs to the adenylate kinase family. As to quaternary structure, monomer.

It localises to the cytoplasm. It catalyses the reaction AMP + ATP = 2 ADP. The protein operates within purine metabolism; AMP biosynthesis via salvage pathway; AMP from ADP: step 1/1. Its function is as follows. Catalyzes the reversible transfer of the terminal phosphate group between ATP and AMP. Plays an important role in cellular energy homeostasis and in adenine nucleotide metabolism. The sequence is that of Adenylate kinase from Ruthia magnifica subsp. Calyptogena magnifica.